The primary structure comprises 326 residues: Phospho-N-acetylmuramoyl-pentapeptide-transferase (326 aa).

The next 10 helical transmembrane spans lie at 3-23 (LPTK…PYFI), 51-71 (TPTM…LFWV), 77-97 (ILLL…DDYL), 113-133 (ILIQ…YFTE), 143-163 (GIMI…VVGS), 175-195 (GLAA…AYMT), 199-219 (ISVI…LWFN), 225-245 (IFMG…TSVL), 250-270 (VLFA…VIQV), and 306-326 (IVIK…AFLL).

The protein belongs to the glycosyltransferase 4 family. MraY subfamily. Mg(2+) is required as a cofactor.

The protein localises to the cell membrane. It carries out the reaction UDP-N-acetyl-alpha-D-muramoyl-L-alanyl-gamma-D-glutamyl-meso-2,6-diaminopimeloyl-D-alanyl-D-alanine + di-trans,octa-cis-undecaprenyl phosphate = di-trans,octa-cis-undecaprenyl diphospho-N-acetyl-alpha-D-muramoyl-L-alanyl-D-glutamyl-meso-2,6-diaminopimeloyl-D-alanyl-D-alanine + UMP. It functions in the pathway cell wall biogenesis; peptidoglycan biosynthesis. In terms of biological role, catalyzes the initial step of the lipid cycle reactions in the biosynthesis of the cell wall peptidoglycan: transfers peptidoglycan precursor phospho-MurNAc-pentapeptide from UDP-MurNAc-pentapeptide onto the lipid carrier undecaprenyl phosphate, yielding undecaprenyl-pyrophosphoryl-MurNAc-pentapeptide, known as lipid I. This is Phospho-N-acetylmuramoyl-pentapeptide-transferase from Wolbachia sp. subsp. Brugia malayi (strain TRS).